The sequence spans 368 residues: Forkhead box protein I2 (368 aa).

The segment at 33–54 is disordered; it reads QNQQLPQRPAAPPALGYGRNEY. The fork-head DNA-binding region spans 124–218; the sequence is RPPYSYSSLI…DNGNFRRKRK (95 aa). Positions 243-272 are disordered; the sequence is SLGSDSPRGASALEQSSYGTPESKSRPAGG. The span at 255-264 shows a compositional bias: polar residues; that stretch reads LEQSSYGTPE.

The protein localises to the nucleus. Functionally, possible transcriptional activator. The polypeptide is Forkhead box protein I2 (Xenopus tropicalis (Western clawed frog)).